Reading from the N-terminus, the 130-residue chain is Small ribosomal subunit protein uS9 (130 aa).

This sequence belongs to the universal ribosomal protein uS9 family.

The chain is Small ribosomal subunit protein uS9 from Halalkalibacterium halodurans (strain ATCC BAA-125 / DSM 18197 / FERM 7344 / JCM 9153 / C-125) (Bacillus halodurans).